The sequence spans 62 residues: Large ribosomal subunit protein bL28 (62 aa).

Belongs to the bacterial ribosomal protein bL28 family.

This chain is Large ribosomal subunit protein bL28, found in Helicobacter pylori (strain HPAG1).